A 140-amino-acid chain; its full sequence is Hemoglobin subunit alpha (140 aa).

Residues 1-140 (LSAADKGHVK…VSTVLTSKYR (140 aa)) form the Globin domain. Ser-2 bears the Phosphoserine mark. N6-succinyllysine occurs at positions 6 and 10. The residue at position 15 (Lys-15) is an N6-acetyllysine; alternate. Lys-15 carries the post-translational modification N6-succinyllysine; alternate. Phosphotyrosine is present on Tyr-23. A Phosphoserine modification is found at Ser-34. Lys-39 is modified (N6-succinyllysine). The residue at position 48 (Ser-48) is a Phosphoserine. Residue His-57 coordinates O2. His-86 serves as a coordination point for heme b. Ser-101 is subject to Phosphoserine. Thr-107 carries the phosphothreonine modification. The residue at position 123 (Ser-123) is a Phosphoserine. Phosphothreonine occurs at positions 133 and 136. Ser-137 carries the post-translational modification Phosphoserine.

Belongs to the globin family. As to quaternary structure, heterotetramer of two alpha chains and two beta chains. Red blood cells.

Functionally, involved in oxygen transport from the lung to the various peripheral tissues. In terms of biological role, hemopressin acts as an antagonist peptide of the cannabinoid receptor CNR1. Hemopressin-binding efficiently blocks cannabinoid receptor CNR1 and subsequent signaling. This chain is Hemoglobin subunit alpha (HBA), found in Tragelaphus strepsiceros (Greater kudu).